A 129-amino-acid chain; its full sequence is Protein yippee-like (129 aa).

Residues 12-109 (KIYSCKHCGT…LERFKITGPD (98 aa)) form the Yippee domain. The Zn(2+) site is built by C16, C19, C72, and C75.

This sequence belongs to the yippee family.

In Solanum tuberosum (Potato), this protein is Protein yippee-like.